Here is a 179-residue protein sequence, read N- to C-terminus: Large ribosomal subunit protein uL5 (179 aa).

Belongs to the universal ribosomal protein uL5 family. As to quaternary structure, part of the 50S ribosomal subunit; part of the 5S rRNA/L5/L18/L25 subcomplex. Contacts the 5S rRNA and the P site tRNA. Forms a bridge to the 30S subunit in the 70S ribosome.

Functionally, this is one of the proteins that bind and probably mediate the attachment of the 5S RNA into the large ribosomal subunit, where it forms part of the central protuberance. In the 70S ribosome it contacts protein S13 of the 30S subunit (bridge B1b), connecting the 2 subunits; this bridge is implicated in subunit movement. Contacts the P site tRNA; the 5S rRNA and some of its associated proteins might help stabilize positioning of ribosome-bound tRNAs. The polypeptide is Large ribosomal subunit protein uL5 (Lachnoclostridium phytofermentans (strain ATCC 700394 / DSM 18823 / ISDg) (Clostridium phytofermentans)).